We begin with the raw amino-acid sequence, 351 residues long: Histidinol-phosphate aminotransferase (351 aa).

Lys221 carries the post-translational modification N6-(pyridoxal phosphate)lysine.

This sequence belongs to the class-II pyridoxal-phosphate-dependent aminotransferase family. Histidinol-phosphate aminotransferase subfamily. Homodimer. It depends on pyridoxal 5'-phosphate as a cofactor.

It catalyses the reaction L-histidinol phosphate + 2-oxoglutarate = 3-(imidazol-4-yl)-2-oxopropyl phosphate + L-glutamate. The protein operates within amino-acid biosynthesis; L-histidine biosynthesis; L-histidine from 5-phospho-alpha-D-ribose 1-diphosphate: step 7/9. The protein is Histidinol-phosphate aminotransferase of Staphylococcus saprophyticus subsp. saprophyticus (strain ATCC 15305 / DSM 20229 / NCIMB 8711 / NCTC 7292 / S-41).